The following is a 332-amino-acid chain: Biotin synthase (332 aa).

One can recognise a Radical SAM core domain in the interval 47 to 273; that stretch reads YYGNKVKLNM…MNPTKEIRIA (227 aa). [4Fe-4S] cluster-binding residues include Cys-65, Cys-69, and Cys-72. [2Fe-2S] cluster-binding residues include Cys-109, Cys-141, Cys-201, and Arg-271.

This sequence belongs to the radical SAM superfamily. Biotin synthase family. As to quaternary structure, homodimer. [4Fe-4S] cluster serves as cofactor. [2Fe-2S] cluster is required as a cofactor.

The enzyme catalyses (4R,5S)-dethiobiotin + (sulfur carrier)-SH + 2 reduced [2Fe-2S]-[ferredoxin] + 2 S-adenosyl-L-methionine = (sulfur carrier)-H + biotin + 2 5'-deoxyadenosine + 2 L-methionine + 2 oxidized [2Fe-2S]-[ferredoxin]. Its pathway is cofactor biosynthesis; biotin biosynthesis; biotin from 7,8-diaminononanoate: step 2/2. Functionally, catalyzes the conversion of dethiobiotin (DTB) to biotin by the insertion of a sulfur atom into dethiobiotin via a radical-based mechanism. The protein is Biotin synthase of Geobacillus thermodenitrificans (strain NG80-2).